A 151-amino-acid polypeptide reads, in one-letter code: 3-dehydroquinate dehydratase (151 aa).

Tyrosine 24 (proton acceptor) is an active-site residue. Positions 76, 82, and 89 each coordinate substrate. Histidine 102 serves as the catalytic Proton donor. Residues 103–104 (VS) and arginine 113 contribute to the substrate site.

This sequence belongs to the type-II 3-dehydroquinase family. Homododecamer.

It catalyses the reaction 3-dehydroquinate = 3-dehydroshikimate + H2O. The protein operates within metabolic intermediate biosynthesis; chorismate biosynthesis; chorismate from D-erythrose 4-phosphate and phosphoenolpyruvate: step 3/7. In terms of biological role, catalyzes a trans-dehydration via an enolate intermediate. The protein is 3-dehydroquinate dehydratase of Afipia carboxidovorans (strain ATCC 49405 / DSM 1227 / KCTC 32145 / OM5) (Oligotropha carboxidovorans).